Reading from the N-terminus, the 138-residue chain is MTTHNRPARVAEEFRHELSALLARGLKDPRITGFVTVTGSKMSPDLKEATVYVSIHGDERVRKDTFAGLQAAAGFLQREVSRALRLRNTPHLRFVYDESVARGDRIERLLREARTQGQEPAADVEPAPGAAPDDEAEE.

The tract at residues Glu112–Glu138 is disordered. Positions Glu119–Ala131 are enriched in low complexity.

It belongs to the RbfA family. As to quaternary structure, monomer. Binds 30S ribosomal subunits, but not 50S ribosomal subunits or 70S ribosomes.

It is found in the cytoplasm. Functionally, one of several proteins that assist in the late maturation steps of the functional core of the 30S ribosomal subunit. Associates with free 30S ribosomal subunits (but not with 30S subunits that are part of 70S ribosomes or polysomes). Required for efficient processing of 16S rRNA. May interact with the 5'-terminal helix region of 16S rRNA. The chain is Ribosome-binding factor A from Anaeromyxobacter dehalogenans (strain 2CP-C).